A 591-amino-acid polypeptide reads, in one-letter code: L-fucose isomerase (591 aa).

Residues Glu337 and Asp361 each act as proton acceptor in the active site. Mn(2+)-binding residues include Glu337, Asp361, and His528.

This sequence belongs to the L-fucose isomerase family. As to quaternary structure, homohexamer. Mn(2+) serves as cofactor.

It is found in the cytoplasm. The catalysed reaction is L-fucose = L-fuculose. Its pathway is carbohydrate degradation; L-fucose degradation; L-lactaldehyde and glycerone phosphate from L-fucose: step 1/3. Its function is as follows. Converts the aldose L-fucose into the corresponding ketose L-fuculose. The polypeptide is L-fucose isomerase (Escherichia coli O17:K52:H18 (strain UMN026 / ExPEC)).